The chain runs to 507 residues: ATP synthase subunit alpha, chloroplastic (507 aa).

Residue 170–177 participates in ATP binding; the sequence is GDRQTGKT.

The protein belongs to the ATPase alpha/beta chains family. F-type ATPases have 2 components, CF(1) - the catalytic core - and CF(0) - the membrane proton channel. CF(1) has five subunits: alpha(3), beta(3), gamma(1), delta(1), epsilon(1). CF(0) has four main subunits: a, b, b' and c.

It is found in the plastid. The protein resides in the chloroplast thylakoid membrane. It catalyses the reaction ATP + H2O + 4 H(+)(in) = ADP + phosphate + 5 H(+)(out). Its function is as follows. Produces ATP from ADP in the presence of a proton gradient across the membrane. The alpha chain is a regulatory subunit. This is ATP synthase subunit alpha, chloroplastic from Anthoceros angustus (Hornwort).